The following is a 1188-amino-acid chain: DNA-directed RNA polymerase subunit beta (1188 aa).

Positions 1149 to 1188 (ELRDLDEGEDDDVMHVDDLEKAREKQAQETPEVSENSEEK) are disordered. Basic and acidic residues predominate over residues 1161–1175 (VMHVDDLEKAREKQA).

The protein belongs to the RNA polymerase beta chain family. The RNAP catalytic core consists of 2 alpha, 1 beta, 1 beta' and 1 omega subunit. When a sigma factor is associated with the core the holoenzyme is formed, which can initiate transcription.

It carries out the reaction RNA(n) + a ribonucleoside 5'-triphosphate = RNA(n+1) + diphosphate. Its function is as follows. DNA-dependent RNA polymerase catalyzes the transcription of DNA into RNA using the four ribonucleoside triphosphates as substrates. The polypeptide is DNA-directed RNA polymerase subunit beta (Streptococcus uberis (strain ATCC BAA-854 / 0140J)).